A 296-amino-acid polypeptide reads, in one-letter code: Short-chain dehydrogenase/reductase ascJ (296 aa).

Residues Ile-28, Asp-66, and Asn-93 each contribute to the NADP(+) site. Ser-155 functions as the Proton donor in the catalytic mechanism. The NADP(+) site is built by Tyr-168, Lys-172, and Thr-205. Tyr-168 acts as the Proton acceptor in catalysis. The Lowers pKa of active site Tyr role is filled by Lys-172.

The protein belongs to the short-chain dehydrogenases/reductases (SDR) family.

It carries out the reaction ascofuranol + A = ascofuranone + AH2. It functions in the pathway secondary metabolite biosynthesis; terpenoid biosynthesis. Functionally, short-chain dehydrogenase/reductase; part of the asc-2 gene cluster that mediates the biosynthesis of ascofuranone, a strong inhibitor of cyanide-insensitive alternative oxidases and a promising drug candidate against African trypanosomiasis. The first step in the pathway is performed by the non-reducing polyketide synthase ascC that produces orsellinic acid by condensing acetyl-CoA with 3 malonyl-CoA units. Orsellinic acid is then prenylated by the prenyltransferase ascA to yield ilicicolinic acid B. Ilicicolinic acid B is further reduced to ilicicolin B by the reductase ascB. The halogenase ascD then chlorinates ilicicolin B to produce ilicicolin A which is converted to ilicicolin A epoxide by the cytochrome P450 monooxygenase ascE that catalyzes stereoselective epoxidation of the terminal double bond of the prenyl group. Ilicicolin A epoxide is the last common precursor for the biosynthesis of ascofuranone and ascochlorin. The terpene cyclase ascF produces a monocyclic terpene, and the cyclization reaction is proposed to be initiated by protonation of the terminal epoxide of ilicicolin A epoxide to generate a monocyclic tertiarycation, which is followed by a series of hydride and methyl shifts with abstraction of proton, leading to the formation of the (14S,15R,19R)-trimethylcyclohexanone ring structure of ilicicolin C, which is finally reduced to ascochlorin by the dehydrogenase ascG. On the other hand, ilicicolin A epoxide is hydroxylated by the cytochrome P450 monooxygenase ascH, and the resultant product is cyclized by the terpene cyclase ascI to ascofuranol via protonation-initiated epoxide ring opening, which facilitates the 6-endo-tet cyclization to form the tetrahy-drofuran ring. Finally, ascofuranol is oxidized into ascofuranone by ascJ. This is Short-chain dehydrogenase/reductase ascJ from Acremonium egyptiacum (Oospora egyptiaca).